Reading from the N-terminus, the 969-residue chain is RNA polymerase-associated protein RapA (969 aa).

The Helicase ATP-binding domain occupies 164 to 334; the sequence is EVGRRYAPRV…FARLRLLDPD (171 aa). 177 to 184 provides a ligand contact to ATP; that stretch reads DEVGLGKT. The DEAH box signature appears at 280–283; sequence DEAH. In terms of domain architecture, Helicase C-terminal spans 492–672; it reads RVNWLLELLK…GLEPLIEESA (181 aa).

This sequence belongs to the SNF2/RAD54 helicase family. RapA subfamily. Interacts with the RNAP. Has a higher affinity for the core RNAP than for the holoenzyme. Its ATPase activity is stimulated by binding to RNAP.

Functionally, transcription regulator that activates transcription by stimulating RNA polymerase (RNAP) recycling in case of stress conditions such as supercoiled DNA or high salt concentrations. Probably acts by releasing the RNAP, when it is trapped or immobilized on tightly supercoiled DNA. Does not activate transcription on linear DNA. Probably not involved in DNA repair. This is RNA polymerase-associated protein RapA from Aliivibrio salmonicida (strain LFI1238) (Vibrio salmonicida (strain LFI1238)).